The chain runs to 589 residues: Oligo-1,6-glucosidase IMA2 (589 aa).

Asp-215 functions as the Nucleophile in the catalytic mechanism. The active-site Proton donor is Glu-277.

This sequence belongs to the glycosyl hydrolase 13 family.

It carries out the reaction Hydrolysis of (1-&gt;6)-alpha-D-glucosidic linkages in some oligosaccharides produced from starch and glycogen by alpha-amylase, and in isomaltose.. In terms of biological role, alpha-glucosidase with specificity for isomaltase, methyl-alpha-glucoside, and palatinose. The polypeptide is Oligo-1,6-glucosidase IMA2 (IMA2) (Saccharomyces cerevisiae (strain ATCC 204508 / S288c) (Baker's yeast)).